We begin with the raw amino-acid sequence, 299 residues long: Coenzyme PQQ synthesis protein B (299 aa).

This sequence belongs to the PqqB family.

It functions in the pathway cofactor biosynthesis; pyrroloquinoline quinone biosynthesis. Its function is as follows. May be involved in the transport of PQQ or its precursor to the periplasm. In Methylorubrum extorquens (strain PA1) (Methylobacterium extorquens), this protein is Coenzyme PQQ synthesis protein B.